Consider the following 1174-residue polypeptide: DNA-directed RNA polymerase subunit beta (1174 aa).

The protein belongs to the RNA polymerase beta chain family. As to quaternary structure, the RNAP catalytic core consists of 2 alpha, 1 beta, 1 beta' and 1 omega subunit. When a sigma factor is associated with the core the holoenzyme is formed, which can initiate transcription.

It carries out the reaction RNA(n) + a ribonucleoside 5'-triphosphate = RNA(n+1) + diphosphate. DNA-dependent RNA polymerase catalyzes the transcription of DNA into RNA using the four ribonucleoside triphosphates as substrates. The sequence is that of DNA-directed RNA polymerase subunit beta from Mycolicibacterium gilvum (strain PYR-GCK) (Mycobacterium gilvum (strain PYR-GCK)).